Consider the following 107-residue polypeptide: Neuroparsin-A (107 aa).

Positions 1–22 are cleaved as a signal peptide; that stretch reads MKATAALVAATLLLAVTLFHRA. A propeptide spanning residues 23 to 24 is cleaved from the precursor; that stretch reads ER.

Homodimer; disulfide-linked.

Its function is as follows. Neurosparins are multifunctional neurohormones: they inhibit the effects of juvenile hormone, stimulate fluid reabsorption of isolated recta and induces an increase in hemolymph lipid and trehalose levels. This is Neuroparsin-A from Locusta migratoria (Migratory locust).